The primary structure comprises 401 residues: Nicotinate phosphoribosyltransferase (401 aa).

Residue His-224 is modified to Phosphohistidine; by autocatalysis.

The protein belongs to the NAPRTase family. In terms of processing, transiently phosphorylated on a His residue during the reaction cycle. Phosphorylation strongly increases the affinity for substrates and increases the rate of nicotinate D-ribonucleotide production. Dephosphorylation regenerates the low-affinity form of the enzyme, leading to product release.

It catalyses the reaction nicotinate + 5-phospho-alpha-D-ribose 1-diphosphate + ATP + H2O = nicotinate beta-D-ribonucleotide + ADP + phosphate + diphosphate. The protein operates within cofactor biosynthesis; NAD(+) biosynthesis; nicotinate D-ribonucleotide from nicotinate: step 1/1. Functionally, catalyzes the synthesis of beta-nicotinate D-ribonucleotide from nicotinate and 5-phospho-D-ribose 1-phosphate at the expense of ATP. This is Nicotinate phosphoribosyltransferase from Pseudomonas putida (strain GB-1).